Consider the following 360-residue polypeptide: Photosystem II protein D1 (360 aa).

Helical transmembrane passes span 30-47, 119-134, and 143-157; these read YVGW…AATT, HFLI…QWEL, and WICV…AAFA. Residue His-119 coordinates chlorophyll a. Tyr-127 lines the pheophytin a pocket. Residues Asp-171 and Glu-190 each contribute to the [CaMn4O5] cluster site. Residues 198–219 traverse the membrane as a helical segment; sequence FHMAGVAGMFGGALFSAMHGSL. His-199 contributes to the chlorophyll a binding site. Residues His-216 and 265–266 each bind a quinone; that span reads SF. A Fe cation-binding site is contributed by His-216. His-273 contacts Fe cation. A helical membrane pass occupies residues 275-289; that stretch reads FLASWPVICVWLTSM. 4 residues coordinate [CaMn4O5] cluster: His-333, Glu-334, Asp-343, and Ala-345. A propeptide spanning residues 346 to 360 is cleaved from the precursor; sequence AAESTSVALVAPAIG.

The protein belongs to the reaction center PufL/M/PsbA/D family. In terms of assembly, PSII is composed of 1 copy each of membrane proteins PsbA, PsbB, PsbC, PsbD, PsbE, PsbF, PsbH, PsbI, PsbJ, PsbK, PsbL, PsbM, PsbT, PsbX, PsbY, Psb30/Ycf12, peripheral proteins PsbO, CyanoQ (PsbQ), PsbU, PsbV and a large number of cofactors. It forms dimeric complexes. The cofactor is The D1/D2 heterodimer binds P680, chlorophylls that are the primary electron donor of PSII, and subsequent electron acceptors. It shares a non-heme iron and each subunit binds pheophytin, quinone, additional chlorophylls, carotenoids and lipids. D1 provides most of the ligands for the Mn4-Ca-O5 cluster of the oxygen-evolving complex (OEC). There is also a Cl(-1) ion associated with D1 and D2, which is required for oxygen evolution. The PSII complex binds additional chlorophylls, carotenoids and specific lipids.. In terms of processing, tyr-162 forms a radical intermediate that is referred to as redox-active TyrZ, YZ or Y-Z. C-terminally processed by CtpA; processing is essential to allow assembly of the oxygen-evolving complex and thus photosynthetic growth.

Its subcellular location is the cellular thylakoid membrane. The enzyme catalyses 2 a plastoquinone + 4 hnu + 2 H2O = 2 a plastoquinol + O2. Its function is as follows. Photosystem II (PSII) is a light-driven water:plastoquinone oxidoreductase that uses light energy to abstract electrons from H(2)O, generating O(2) and a proton gradient subsequently used for ATP formation. It consists of a core antenna complex that captures photons, and an electron transfer chain that converts photonic excitation into a charge separation. The D1/D2 (PsbA/PsbD) reaction center heterodimer binds P680, the primary electron donor of PSII as well as several subsequent electron acceptors. In Prochlorococcus marinus (strain NATL1A), this protein is Photosystem II protein D1.